The primary structure comprises 323 residues: Putative divalent cation/proton antiporter TMEM165 (323 aa).

The signal sequence occupies residues 1–33 (MAAAARGSGRAPTRRLLVLLLLQLLWAPAGVRA). Over 34–89 (GPEEDLSHRNQEPPAPAQQLQPQPAAVQGLEPARAEKGLTPVAPVHTNKEDAAAQT) the chain is Lumenal. The segment covering 35-44 (PEEDLSHRNQ) has biased composition (basic and acidic residues). The tract at residues 35 to 60 (PEEDLSHRNQEPPAPAQQLQPQPAAV) is disordered. Positions 50 to 59 (AQQLQPQPAA) are enriched in low complexity. A helical membrane pass occupies residues 90-110 (NLGFIHAFVAAISVIIVSELG). The Cytoplasmic portion of the chain corresponds to 111–126 (DKTFFIAAIMAMRYNR). A helical membrane pass occupies residues 127 to 147 (LTVLAGAMLALALMTCLSVLF). The Lumenal portion of the chain corresponds to 148-151 (GYAT). Residues 152-172 (TVIPRVYTYYVSTALFAIFGI) traverse the membrane as a helical segment. Residues 173–227 (RMLREGLKMSPDEGQEELEEVQAELKKKDEEFQRTKLLNGPDVETGTSTAIPQKK) are Cytoplasmic-facing. Positions 184–211 (DEGQEELEEVQAELKKKDEEFQRTKLLN) form a coiled coil. Residues 228–248 (WLHFISPIFVQALTLTFLAEW) traverse the membrane as a helical segment. At 249 to 266 (GDRSQLTTIVLAAREDPY) the chain is on the lumenal side. The helical transmembrane segment at 267 to 287 (GVAVGGTVGHCLCTGLAVIGG) threads the bilayer. At 288–298 (RMIAQKISVRT) the chain is on the cytoplasmic side. The helical transmembrane segment at 299–319 (VTIIGGIVFLAFAFSALFISP) threads the bilayer. Residues 320–323 (ESGF) lie on the Lumenal side of the membrane.

It belongs to the GDT1 family. As to expression, expressed in mammary epithelial cells (at protein level).

Its subcellular location is the golgi apparatus membrane. The enzyme catalyses Ca(2+)(in) + n H(+)(out) = Ca(2+)(out) + n H(+)(in). It carries out the reaction Mn(2+)(in) + n H(+)(out) = Mn(2+)(out) + n H(+)(in). In terms of biological role, putative divalent cation:proton antiporter that exchanges calcium or manganese ions for protons across the Golgi membrane. Mediates the reversible transport of calcium or manganese to the Golgi lumen driven by the proton gradient and possibly the membrane potential generated by V-ATPase. Provides calcium or manganese cofactors to resident Golgi enzymes and contributes to the maintenance of an acidic luminal Golgi pH required for proper functioning of the secretory pathway. Promotes Ca(2+) storage within the Golgi lumen of the mammary epithelial cells to be then secreted into milk. The transport mechanism and stoichiometry remains to be elucidated. This Mus musculus (Mouse) protein is Putative divalent cation/proton antiporter TMEM165.